The primary structure comprises 367 residues: Mannan endo-1,4-beta-mannosidase (367 aa).

An N-terminal signal peptide occupies residues 1–17; sequence MLLTALAVLFASTGCQA. Substrate is bound by residues W79 and N176. E177 acts as the Proton donor in catalysis. C192 and C259 are joined by a disulfide. W205, W240, and Y279 together coordinate substrate. The active-site Nucleophile is the E308. Residue W337 coordinates substrate.

Monomer. Post-translationally, the disulfide bond between Cys-192 and Cys-259 has not been observed in X-ray crystallography. This may be a consequence of the X-ray radiation.

It catalyses the reaction Random hydrolysis of (1-&gt;4)-beta-D-mannosidic linkages in mannans, galactomannans and glucomannans.. In terms of biological role, hydrolyzes 1,4-beta linked polysaccharide backbones of mannans. Hydrolyzes mannohexaose (M6) preferentially to mannotriose (M4) and less preferentially to mannotetraose (M3), mannopentaose (M5), and mannobiose (M2); hydrolyzes M5 preferentially to M2, and M3, and less preferentially to mannotetraose M4; hydrolyzes M4 preferentially to M3, and less preferentially to mannose (M1), plus very little M2. Does not hydrolyze mannobiose or mannotriose. Does not hydrolyze xlyan, starch, cellulose or galactose. This chain is Mannan endo-1,4-beta-mannosidase, found in Mytilus edulis (Blue mussel).